We begin with the raw amino-acid sequence, 356 residues long: Heparan sulfate 2-O-sulfotransferase 1 (356 aa).

At 1-11 the chain is on the cytoplasmic side; it reads MGLLRIMMPPK. The chain crosses the membrane as a helical; Signal-anchor for type II membrane protein span at residues 12–28; the sequence is LQLLAVLTFGVLMLFLE. Residues 24 to 51 adopt a coiled-coil conformation; the sequence is MLFLENQIQNLEESREKLERAIARHEVR. Over 29-356 the chain is Lumenal; that stretch reads NQIQNLEESR…FYEKIYPKSN (328 aa). Lysine 83, threonine 84, alanine 85, serine 86, threonine 87, and serine 88 together coordinate adenosine 3',5'-bisphosphate. N-linked (GlcNAc...) asparagine glycosylation is found at asparagine 108 and asparagine 127. Catalysis depends on residues histidine 140 and histidine 142. Residues arginine 164 and serine 172 each coordinate adenosine 3',5'-bisphosphate. Intrachain disulfides connect cysteine 201-cysteine 209 and cysteine 222-cysteine 228. Adenosine 3',5'-bisphosphate-binding residues include tyrosine 279, serine 285, threonine 290, and lysine 293.

The protein belongs to the sulfotransferase 3 family. As to quaternary structure, homotrimer.

The protein resides in the golgi apparatus membrane. In terms of biological role, catalyzes the transfer of a sulfo group from 3'-phospho-5'-adenylyl sulfate (PAPS) to the 2-OH position of iduronic acid (IdoA) or glucuronic acid (GlcA) within the heparan sulfate (HS) chain and participates in HS biosynthesis. The chain is Heparan sulfate 2-O-sulfotransferase 1 from Xenopus laevis (African clawed frog).